The following is a 138-amino-acid chain: Mitochondrial import inner membrane translocase subunit tim-16 (138 aa).

Over residues 32-43 (TQQAAARHAAAT) the composition is skewed to low complexity. Disordered stretches follow at residues 32-58 (TQQA…NANA) and 118-138 (LSRL…NSKE). The segment covering 44-56 (GQSPSETKENANA) has biased composition (polar residues). The J-like stretch occupies residues 66-119 (ESLQILNVKTPLNREDVEKHYEHLFAINDKAKGGTFYLQSKVYRAKERIDEELS).

The protein belongs to the TIM16/PAM16 family. Probable component of the PAM complex at least composed of a mitochondrial HSP70 protein, GrpE, tim-44, tim-16 and tim-14. Associates with the TIM23 complex.

It is found in the mitochondrion inner membrane. Regulates ATP-dependent protein translocation into the mitochondrial matrix. The sequence is that of Mitochondrial import inner membrane translocase subunit tim-16 from Caenorhabditis briggsae.